The primary structure comprises 319 residues: Transcriptional regulator LsrR (319 aa).

The H-T-H motif DNA-binding region spans 32–55 (QSEISERLGLTRLKVSRLLEKGHQ).

It belongs to the SorC transcriptional regulatory family.

It is found in the cytoplasm. Its activity is regulated as follows. Inactivated by phosphorylated autoinducer-2 (phospho-AI-2). Phospho-AI-2 acts by binding to LsrR, which is then unable to bind to the promoter regions, allowing the transcription of the target genes. In terms of biological role, transcriptional regulator that represses the expression of the lsr operon (lsrACDBFGE) in the absence of the quorum-sensing signaling molecule autoinducer 2 (AI-2). It also represses the expression of the lsrRK operon. Acts by binding to the intergenic region between the lsr operon and lsrR. In the presence of phosphorylated autoinducer-2 (phospho-AI-2), LsrR is inactivated, leading to the transcription of the genes. The regulatory function of LsrR was thought to be limited to the lsr operon, but it was subsequently shown to be involved, directly or indirectly, in the regulation of SPI-1 and flagella genes. It negatively regulates the expression of those genes, which reduces the ability of Salmonella to invade host cells. This is Transcriptional regulator LsrR from Salmonella typhimurium (strain LT2 / SGSC1412 / ATCC 700720).